The chain runs to 422 residues: MEADPSLVSYADQHGEWETREISIFGVVKSFISQLSIGQELTKVSMPSIFLMPYSILELAASRHLKYIHLLISAQHEEDPLKRMAIIIQYFFSCVRDGNFQKKPYNALLGEVHKCFVKYPSYDGQSTSTAQFIGEQVTHHPPLTAFNITTSEGITLDCNVQFSAKFHMNSVSVVTTGAVKICIPVKVGNQIIKETYIIDKGLPDALVKNVIFGTRSIYWTDSVDIMCEDSKTSATVHFDKNEYVKGEVSVYNTELEVEEHRASLKGYISDVVNIDYLESKSSEAAPASSASKKEKKKEKKKAKHSKHTCSPSDTILMDTKQLEPNSTLYPKQTDPITSLGTWKEVTKQIVAGDMQAADQIKKEIEDEQRKRLQITKEEEKKERAYFKYNDDKEIWEFKSTQTLAPVSNSTSSTASDAASGSN.

The interval 283 to 313 (EAAPASSASKKEKKKEKKKAKHSKHTCSPSD) is disordered. Positions 293–307 (KEKKKEKKKAKHSKH) are enriched in basic residues. Positions 354–384 (MQAADQIKKEIEDEQRKRLQITKEEEKKERA) form a coiled coil. Positions 402–422 (TLAPVSNSTSSTASDAASGSN) are disordered. Over residues 407 to 422 (SNSTSSTASDAASGSN) the composition is skewed to low complexity.

It belongs to the OSBP family.

This is Oxysterol-binding protein 7 (osbG) from Dictyostelium discoideum (Social amoeba).